The primary structure comprises 409 residues: Small ribosomal subunit protein mS47 (409 aa).

Residues 1 to 26 (MQTVKALRRVSEPLQWVRSVSYGRRF) constitute a mitochondrion transit peptide. Residues 388-409 (ASELDDSDSELKLPTAQREPYF) are disordered.

Belongs to the enoyl-CoA hydratase/isomerase family. Mitochondrion-specific ribosomal protein mS47 subfamily. Component of the mitochondrial ribosome small subunit.

It localises to the mitochondrion. This Arabidopsis thaliana (Mouse-ear cress) protein is Small ribosomal subunit protein mS47.